The sequence spans 64 residues: MVKECTLTGKKSNNGYTVSHSHIRTKKIQHINLQTKKIWSDKQKRWIKIKICTKAIKSLHKLKV.

It belongs to the bacterial ribosomal protein bL28 family.

It is found in the plastid. The protein resides in the chloroplast. The chain is Large ribosomal subunit protein bL28c from Gracilaria tenuistipitata var. liui (Red alga).